A 109-amino-acid polypeptide reads, in one-letter code: Probable glutaredoxin slr1562 (109 aa).

Residues 11–109 (LSGRQADGIK…PLLATPPNPA (99 aa)) enclose the Glutaredoxin domain. The cysteines at positions 31 and 34 are disulfide-linked.

This sequence belongs to the glutaredoxin family.

Functionally, has a glutathione-disulfide oxidoreductase activity in the presence of NADPH and glutathione reductase. Reduces low molecular weight disulfides and proteins. The sequence is that of Probable glutaredoxin slr1562 from Synechocystis sp. (strain ATCC 27184 / PCC 6803 / Kazusa).